A 541-amino-acid polypeptide reads, in one-letter code: Chaperonin GroEL (541 aa).

ATP-binding positions include 29-32, 86-90, Gly-413, and Asp-495; these read TLGP and DGTTT.

As to quaternary structure, forms a cylinder of 14 subunits composed of two heptameric rings stacked back-to-back. Interacts with the co-chaperonin GroES.

It is found in the cytoplasm. The catalysed reaction is ATP + H2O + a folded polypeptide = ADP + phosphate + an unfolded polypeptide.. In terms of biological role, together with its co-chaperonin GroES, plays an essential role in assisting protein folding. The GroEL-GroES system forms a nano-cage that allows encapsulation of the non-native substrate proteins and provides a physical environment optimized to promote and accelerate protein folding. The protein is Chaperonin GroEL of Thermoanaerobacter brockii (Thermoanaerobium brockii).